We begin with the raw amino-acid sequence, 161 residues long: tRNA-acetylating toxin 1 (161 aa).

Positions 92, 94, 99, 100, 102, 104, 105, 132, and 135 each coordinate acetyl-CoA. Residue Tyr140 is part of the active site. His142 serves as a coordination point for acetyl-CoA.

Belongs to the acetyltransferase family. GNAT subfamily. As to quaternary structure, homodimer (in absence of antitoxin). Forms a complex with cognate antitoxin TacA1. Forms a 4:2 antitoxin:toxin complex with cognate antitoxin TacA1.

It catalyses the reaction glycyl-tRNA(Gly) + acetyl-CoA = N-acetylglycyl-tRNA(Gly) + CoA + H(+). In terms of biological role, toxic component of a type II toxin-antitoxin (TA) system. Acetylates tRNA and inhibits translation, does not acetylate uncharged tRNA. Upon expression in situ acetylates only Gly-tRNA(Gly). In vitro acetylates mainly Gly and Ile/Leu. Upon induction of the toxin gene in lag phase in rich medium (but not mid-exponential phase) the lag phase is extended by several hours, locking bacteria in a non-growth state. Neutralized only by cognate antitoxin TacA1 (A8), but not by TacA2 or TacA3. Its toxic effect is neutralized by expression of peptidyl-tRNA hydrolase (pth) in lag phase. NAD-dependent protein deacylase (cobB) also play a role in detoxifying TacT targets. Expression increases persister cell formation, which is also abolished by either cognate antitoxin or Pth expression. Plays a role in persister cell formation. Its function is as follows. The TacA1-TacT1 complex binds (and probably represses) its own promoter DNA but not that of tacA3-tacT3, it does not repress the tacA3-tacT3 promoter. The polypeptide is tRNA-acetylating toxin 1 (Salmonella typhimurium (strain 14028s / SGSC 2262)).